We begin with the raw amino-acid sequence, 110 residues long: Movement protein TGB2 (110 aa).

The Cytoplasmic segment spans residues 1–10 (MSGAHHLTPP). The helical transmembrane segment at 11-34 (TDYGKPVLAASIGISLALLVYTAT) threads the bilayer. Residues 35–76 (RSTLPHVGDNLHALPHGGRYVDGTKSISYFSPSASKTRDPFP) are Lumenal-facing. Residues 77–92 (FAFLLILTLSGLILLL) traverse the membrane as a helical segment. The Cytoplasmic portion of the chain corresponds to 93 to 110 (SRRRSNPHSCPSCGTPHA).

This sequence belongs to the Tymovirales TGBp2 protein family.

It localises to the host endoplasmic reticulum membrane. Its function is as follows. Plays a role in viral cell-to-cell propagation, by facilitating genome transport to neighboring plant cells through plasmosdesmata,. In Plantago asiatica (P1AMV), this protein is Movement protein TGB2.